The sequence spans 286 residues: Acetylglutamate kinase (286 aa).

Substrate is bound by residues 69–70 (GG), Arg-91, and Asn-185.

The protein belongs to the acetylglutamate kinase family. ArgB subfamily.

The protein localises to the cytoplasm. The enzyme catalyses N-acetyl-L-glutamate + ATP = N-acetyl-L-glutamyl 5-phosphate + ADP. Its pathway is amino-acid biosynthesis; L-arginine biosynthesis; N(2)-acetyl-L-ornithine from L-glutamate: step 2/4. In terms of biological role, catalyzes the ATP-dependent phosphorylation of N-acetyl-L-glutamate. This chain is Acetylglutamate kinase, found in Chlorobium chlorochromatii (strain CaD3).